The following is a 171-amino-acid chain: uncharacterized protein (171 aa).

Residues 3–171 (KKVAIILANE…FNREIVKQLQ (169 aa)) enclose the PfpI endopeptidase domain.

Belongs to the peptidase C56 family.

This is an uncharacterized protein from Staphylococcus aureus (strain MRSA252).